The sequence spans 106 residues: UPF0145 protein MA_3383 (106 aa).

The protein belongs to the UPF0145 family.

The chain is UPF0145 protein MA_3383 from Methanosarcina acetivorans (strain ATCC 35395 / DSM 2834 / JCM 12185 / C2A).